The primary structure comprises 1363 residues: ABC multidrug transporter MDR2 (1363 aa).

The chain crosses the membrane as a helical span at residues 65 to 85 (IALIVIGTIAGIGAGIPFPLL). The region spanning 69 to 367 (VIGTIAGIGA…MAPFMHIFAS (299 aa)) is the ABC transmembrane type-1 1 domain. Asn-97 carries an N-linked (GlcNAc...) asparagine glycan. Helical transmembrane passes span 119–139 (VLQV…HTGC), 193–213 (KVGL…VAFL), 215–235 (VATI…MAFG), 301–321 (IQFG…FWQG), and 336–356 (VSVG…FVLS). An ABC transporter 1 domain is found at 403-682 (IELQDVTFNY…DGVYAGMVRL (280 aa)). 438–445 (GTSGSGKS) is an ATP binding site. 2 N-linked (GlcNAc...) asparagine glycosylation sites follow: Asn-552 and Asn-633. The segment at 738–758 (YMPEEADSLPTEPENEKEKPK) is disordered. Transmembrane regions (helical) follow at residues 781–801 (LGLI…VIFG), 820–840 (GMLF…AVIV), and 896–916 (LTGT…AGVI). One can recognise an ABC transmembrane type-1 2 domain in the interval 781–1052 (LGLITSIMIG…MFALVPDISK (272 aa)). Asn-973 carries an N-linked (GlcNAc...) asparagine glycan. The next 2 membrane-spanning stretches (helical) occupy residues 992-1012 (FWLS…YWWG) and 1016-1036 (ILAG…LLFS). The region spanning 1119–1358 (VQFRNVHFRY…CESYRANVIH (240 aa)) is the ABC transporter 2 domain. Residue 1154–1161 (GPSGSGKS) participates in ATP binding.

The protein belongs to the ABC transporter superfamily. ABCB family. Multidrug resistance exporter (TC 3.A.1.201) subfamily.

Its subcellular location is the cell membrane. Functionally, pleiotropic ABC efflux transporter that may be involved in the modulation susceptibility to a wide range of unrelated cytotoxic compounds. The chain is ABC multidrug transporter MDR2 from Trichophyton tonsurans (strain CBS 112818) (Scalp ringworm fungus).